The chain runs to 292 residues: NAD kinase (292 aa).

Catalysis depends on Asp-73, which acts as the Proton acceptor. Residues 73–74 (DG), 147–148 (NE), His-158, Arg-175, Asp-177, 188–193 (TAYSLS), and Gln-247 each bind NAD(+).

The protein belongs to the NAD kinase family. A divalent metal cation is required as a cofactor.

The protein localises to the cytoplasm. It carries out the reaction NAD(+) + ATP = ADP + NADP(+) + H(+). In terms of biological role, involved in the regulation of the intracellular balance of NAD and NADP, and is a key enzyme in the biosynthesis of NADP. Catalyzes specifically the phosphorylation on 2'-hydroxyl of the adenosine moiety of NAD to yield NADP. The sequence is that of NAD kinase from Enterobacter sp. (strain 638).